A 346-amino-acid polypeptide reads, in one-letter code: Peripherin-2 (346 aa).

Residues 1-24 (MALLKVKFDQKKRVKLAQGLWLMN) are Cytoplasmic-facing. The helical transmembrane segment at 25-43 (WLSVLAGIVIFSLGLFLKI) threads the bilayer. Residues 44–61 (ELRKRSDVMNNSESHFVP) are Lumenal-facing. An N-linked (GlcNAc...) asparagine glycan is attached at Asn-53. Residues 62-80 (NSLIGMGVLSCVFNSLAGK) traverse the membrane as a helical segment. Topologically, residues 81–99 (ICYDALDPSKYAKWKPWLK) are cytoplasmic. Residues 100–123 (SYLVVCVLFNIVLFLVALCCFLMR) form a helical membrane-spanning segment. The Lumenal segment spans residues 124-264 (GSLESTLAQG…LSYYGSLMNS (141 aa)). N-linked (GlcNAc...) asparagine glycosylation is present at Asn-229. A helical transmembrane segment spans residues 265-290 (MGAVTLLVWLFEVSITIGLRYLHTAL). Over 291–346 (EGVSNPEDLECESEGWLLEKSVSETWKAFLESLKKLGKSNQVEAEGADAGQAPEAG) the chain is Cytoplasmic. Residues 341–346 (QAPEAG) form an interaction with MREG region.

This sequence belongs to the PRPH2/ROM1 family. Homodimer; disulfide-linked. Forms a homotetramer. Forms a heterotetramer with ROM1. Homotetramer and heterotetramer core complexes go on to form higher order complexes by formation of intermolecular disulfide bonds. Interacts with MREG. Interacts with STX3. Interacts with SNAP25. In terms of tissue distribution, retina (photoreceptor). In rim region of ROS (rod outer segment) disks.

It is found in the membrane. It localises to the cell projection. Its subcellular location is the cilium. The protein resides in the photoreceptor outer segment. The protein localises to the photoreceptor inner segment. In terms of biological role, essential for retina photoreceptor outer segment disk morphogenesis, may also play a role with ROM1 in the maintenance of outer segment disk structure. Required for the maintenance of retinal outer nuclear layer thickness. Required for the correct development and organization of the photoreceptor inner segment. The protein is Peripherin-2 (PRPH2) of Felis catus (Cat).